The following is a 430-amino-acid chain: Tol-Pal system protein TolB (430 aa).

A signal peptide spans 1 to 26 (MSLMTKLGLRALVASCLIAAGGAAHA).

Belongs to the TolB family. In terms of assembly, the Tol-Pal system is composed of five core proteins: the inner membrane proteins TolA, TolQ and TolR, the periplasmic protein TolB and the outer membrane protein Pal. They form a network linking the inner and outer membranes and the peptidoglycan layer.

Its subcellular location is the periplasm. Its function is as follows. Part of the Tol-Pal system, which plays a role in outer membrane invagination during cell division and is important for maintaining outer membrane integrity. In Paraburkholderia phymatum (strain DSM 17167 / CIP 108236 / LMG 21445 / STM815) (Burkholderia phymatum), this protein is Tol-Pal system protein TolB.